A 188-amino-acid polypeptide reads, in one-letter code: Elongation factor P (188 aa).

The protein belongs to the elongation factor P family.

It localises to the cytoplasm. The protein operates within protein biosynthesis; polypeptide chain elongation. Functionally, involved in peptide bond synthesis. Stimulates efficient translation and peptide-bond synthesis on native or reconstituted 70S ribosomes in vitro. Probably functions indirectly by altering the affinity of the ribosome for aminoacyl-tRNA, thus increasing their reactivity as acceptors for peptidyl transferase. This chain is Elongation factor P, found in Acidiphilium cryptum (strain JF-5).